The chain runs to 258 residues: SLA class II histocompatibility antigen, DQ haplotype D beta chain (258 aa).

A signal peptide spans 1 to 31; sequence MVALRLPRGLWTAALTVMLVVLGAPVAEGRD. The segment at 32–123 is beta-1; that stretch reads SPQDFVVQFK…IEEGTTLQRR (92 aa). The Extracellular portion of the chain corresponds to 32 to 227; the sequence is SPQDFVVQFK…RAQSESAQSK (196 aa). 2 disulfides stabilise this stretch: C44–C108 and C146–C202. N-linked (GlcNAc...) asparagine glycosylation is present at N48. Residues 124 to 217 form a beta-2 region; it reads VQPTVTISPS…SLQSPILVEW (94 aa). The Ig-like C1-type domain maps to 126–230; it reads PTVTISPSKA…SESAQSKMLS (105 aa). Residues 218–227 form a connecting peptide region; it reads RAQSESAQSK. A helical membrane pass occupies residues 228-248; the sequence is MLSGVGGFVLGLIFLGLGLFI. The Cytoplasmic portion of the chain corresponds to 249–258; sequence RHRSQKGLVR.

This sequence belongs to the MHC class II family.

The protein localises to the membrane. The protein is SLA class II histocompatibility antigen, DQ haplotype D beta chain of Sus scrofa (Pig).